The primary structure comprises 138 residues: Sporulation-specific cell division protein SsgB (138 aa).

Belongs to the SsgA family. In terms of assembly, monomer. Interacts with SsgA. Interacts with FtsZ (via N-terminus).

It localises to the cell septum. Its function is as follows. Involved in sporulation-specific cell division. Required for early stages of sporulation. Important in the process of growth cessation prior to sporulation-specific cell division. Recruits cell division protein FtsZ to the future septum sites and tethers the contractile ring structure (Z ring) to the cytoplasmic membrane during sporulation. Stimulates polymerization and filament length of FtsZ in vitro. The polypeptide is Sporulation-specific cell division protein SsgB (Thermobifida fusca (strain YX)).